A 362-amino-acid chain; its full sequence is Adenosine deaminase (362 aa).

The Zn(2+) site is built by H19 and H21. Substrate-binding residues include H21, D23, and G181. H208 lines the Zn(2+) pocket. E211 serves as the catalytic Proton donor. D300 is a binding site for Zn(2+).

This sequence belongs to the metallo-dependent hydrolases superfamily. Adenosine and AMP deaminases family. Adenosine deaminase subfamily. Requires Zn(2+) as cofactor.

The catalysed reaction is adenosine + H2O + H(+) = inosine + NH4(+). It carries out the reaction 2'-deoxyadenosine + H2O + H(+) = 2'-deoxyinosine + NH4(+). Functionally, catalyzes the hydrolytic deamination of adenosine and 2-deoxyadenosine. This chain is Adenosine deaminase, found in Mycolicibacterium vanbaalenii (strain DSM 7251 / JCM 13017 / BCRC 16820 / KCTC 9966 / NRRL B-24157 / PYR-1) (Mycobacterium vanbaalenii).